The chain runs to 395 residues: Type III polyketide synthase A (395 aa).

Residue 63 to 70 (KLEHLCKT) participates in CoA binding. Cys172 (nucleophile) is an active-site residue. 224-225 (GD) contributes to the substrate binding site. CoA contacts are provided by residues Leu274, 314-317 (GGPA), and Ala317.

This sequence belongs to the thiolase-like superfamily. Chalcone/stilbene synthases family. As to quaternary structure, homodimer. Interacts with 4CLL1/ACOS5 and TKPR1. Expressed in flowers and flower buds (at protein level), and, at very low levels, in roots, seedlings, leaves and stems. Mostly confined to anther tapetal cells.

The protein localises to the endoplasmic reticulum. Its pathway is secondary metabolite biosynthesis; flavonoid biosynthesis. Plant type III polyketide synthases (PKSs) that catalyzes the condensation of malonyl-CoA units with various CoA ester starter molecules to generate a diverse array of natural products including long-chain alkyl alpha-pyrones. Accepts up to C(20) chain-length fatty acyl CoAs as starter substrates, and carries out sequential condensations with malonyl-CoA to produce triketide and tetraketide alpha-pyrones, potential sporopollenin precursors. Favorite substrates for are midchain- and v-hydroxylated fatty acyl-CoAs (e.g. 12-hydroxyoctadecanoyl-CoA and 16-hydroxyhexadecanoyl-CoA). Required for pollen development and sporopollenin biosynthesis, the major constituent of exine in the outer pollen wall. In vitro, can use 4-coumaroyl-coenzyme A as substrate to produce bis-noryangonin and fatty acyl-coenzyme A as substrate to produce medium-chain alkyl pyrones. May play a role in both the synthesis of pollen fatty acids and phenolics found in exine. The protein is Type III polyketide synthase A of Arabidopsis thaliana (Mouse-ear cress).